Consider the following 322-residue polypeptide: Probable arabinan endo-1,5-alpha-L-arabinosidase A (322 aa).

Residues 1–19 form the signal peptide; the sequence is MYLPTLAASASLLVGVAHG. The active-site Proton acceptor is the aspartate 34. Catalysis depends on glutamate 201, which acts as the Proton donor.

The protein belongs to the glycosyl hydrolase 43 family.

The protein localises to the secreted. The catalysed reaction is Endohydrolysis of (1-&gt;5)-alpha-arabinofuranosidic linkages in (1-&gt;5)-arabinans.. The protein operates within glycan metabolism; L-arabinan degradation. Functionally, endo-1,5-alpha-L-arabinanase involved in degradation of pectin. Its preferred substrate is linear 1,5-alpha-L-arabinan. This is Probable arabinan endo-1,5-alpha-L-arabinosidase A (abnA) from Emericella nidulans (strain FGSC A4 / ATCC 38163 / CBS 112.46 / NRRL 194 / M139) (Aspergillus nidulans).